Consider the following 141-residue polypeptide: Large ribosomal subunit protein uL11 (141 aa).

This sequence belongs to the universal ribosomal protein uL11 family. As to quaternary structure, part of the ribosomal stalk of the 50S ribosomal subunit. Interacts with L10 and the large rRNA to form the base of the stalk. L10 forms an elongated spine to which L12 dimers bind in a sequential fashion forming a multimeric L10(L12)X complex. In terms of processing, one or more lysine residues are methylated.

Functionally, forms part of the ribosomal stalk which helps the ribosome interact with GTP-bound translation factors. This Limosilactobacillus reuteri (strain DSM 20016) (Lactobacillus reuteri) protein is Large ribosomal subunit protein uL11.